A 152-amino-acid chain; its full sequence is UPF0756 membrane protein PEPE_1090 (152 aa).

Helical transmembrane passes span 4–24 (WLFLIGIFIVALLGKNQSLII), 52–72 (WGVTIISITILVPIATGKIGF), 85–105 (WIAVACGILVSLLSYQGVGFL), and 115–135 (LVMGTIIGVVFMNGIAAGPII).

The protein belongs to the UPF0756 family.

It localises to the cell membrane. The chain is UPF0756 membrane protein PEPE_1090 from Pediococcus pentosaceus (strain ATCC 25745 / CCUG 21536 / LMG 10740 / 183-1w).